Consider the following 154-residue polypeptide: Aspartate carbamoyltransferase regulatory chain (154 aa).

Zn(2+)-binding residues include Cys-109, Cys-114, Cys-138, and Cys-141.

The protein belongs to the PyrI family. In terms of assembly, contains catalytic and regulatory chains. Requires Zn(2+) as cofactor.

Its function is as follows. Involved in allosteric regulation of aspartate carbamoyltransferase. The polypeptide is Aspartate carbamoyltransferase regulatory chain (Yersinia pseudotuberculosis serotype O:1b (strain IP 31758)).